A 249-amino-acid polypeptide reads, in one-letter code: Ubiquinone biosynthesis O-methyltransferase (249 aa).

The S-adenosyl-L-methionine site is built by arginine 41, glycine 72, aspartate 93, and methionine 136.

This sequence belongs to the methyltransferase superfamily. UbiG/COQ3 family.

The enzyme catalyses a 3-demethylubiquinol + S-adenosyl-L-methionine = a ubiquinol + S-adenosyl-L-homocysteine + H(+). It carries out the reaction a 3-(all-trans-polyprenyl)benzene-1,2-diol + S-adenosyl-L-methionine = a 2-methoxy-6-(all-trans-polyprenyl)phenol + S-adenosyl-L-homocysteine + H(+). It functions in the pathway cofactor biosynthesis; ubiquinone biosynthesis. Functionally, O-methyltransferase that catalyzes the 2 O-methylation steps in the ubiquinone biosynthetic pathway. This is Ubiquinone biosynthesis O-methyltransferase from Methylobacterium sp. (strain 4-46).